The primary structure comprises 236 residues: uncharacterized protein (236 aa).

This sequence belongs to the HyuE racemase family.

The protein resides in the cytoplasm. This is an uncharacterized protein from Schizosaccharomyces pombe (strain 972 / ATCC 24843) (Fission yeast).